A 220-amino-acid polypeptide reads, in one-letter code: Deoxyribose-phosphate aldolase (220 aa).

The Proton donor/acceptor role is filled by Asp-89. Residue Lys-151 is the Schiff-base intermediate with acetaldehyde of the active site. Lys-180 acts as the Proton donor/acceptor in catalysis.

This sequence belongs to the DeoC/FbaB aldolase family. DeoC type 1 subfamily.

It localises to the cytoplasm. It catalyses the reaction 2-deoxy-D-ribose 5-phosphate = D-glyceraldehyde 3-phosphate + acetaldehyde. The protein operates within carbohydrate degradation; 2-deoxy-D-ribose 1-phosphate degradation; D-glyceraldehyde 3-phosphate and acetaldehyde from 2-deoxy-alpha-D-ribose 1-phosphate: step 2/2. In terms of biological role, catalyzes a reversible aldol reaction between acetaldehyde and D-glyceraldehyde 3-phosphate to generate 2-deoxy-D-ribose 5-phosphate. This chain is Deoxyribose-phosphate aldolase, found in Mycoplasmopsis pulmonis (strain UAB CTIP) (Mycoplasma pulmonis).